Here is a 199-residue protein sequence, read N- to C-terminus: NAD(P)H dehydrogenase (quinone) (199 aa).

The Flavodoxin-like domain occupies 4-190; the sequence is MLVLYYSAYG…DGARFQGRRV (187 aa). Residues 10–15 and 78–80 each bind FMN; these read SAYGHM and TRY. Tyr12 lines the NAD(+) pocket. Trp98 serves as a coordination point for substrate. Residues 113–119 and His134 contribute to the FMN site; that span reads STATQYG. The disordered stretch occupies residues 162-181; that stretch reads GMTTTADGDGSRQPSAQELD. Over residues 163–177 the composition is skewed to polar residues; the sequence is MTTTADGDGSRQPSA.

It belongs to the WrbA family. Requires FMN as cofactor.

The enzyme catalyses a quinone + NADH + H(+) = a quinol + NAD(+). The catalysed reaction is a quinone + NADPH + H(+) = a quinol + NADP(+). In Brucella suis (strain ATCC 23445 / NCTC 10510), this protein is NAD(P)H dehydrogenase (quinone).